A 333-amino-acid chain; its full sequence is Serine/threonine-protein phosphatase 4 catalytic subunit 1 (333 aa).

Positions 1-28 (MALACTDSANSTFSRVDSPTSGPSDQLT) are disordered. Positions 7-27 (DSANSTFSRVDSPTSGPSDQL) are enriched in polar residues. Mn(2+)-binding residues include D79, H81, D107, and N139. H140 acts as the Proton donor in catalysis. Mn(2+)-binding residues include H189 and H264. L333 carries the post-translational modification Leucine methyl ester.

It belongs to the PPP phosphatase family. PP-4 (PP-X) subfamily. Serine/threonine-protein phosphatase 4 (PP4) occurs in different assemblies of the catalytic and one or more regulatory subunits. The regulatory subunits are likely to be ppfr-1, ppfr-2, ppfr-4 and smk-1. Interacts with mei-1. Requires Mn(2+) as cofactor. Methylation at the C-terminal Leu-333 is critical for interactions with regulatory subunits.

Its subcellular location is the cytoplasm. The protein resides in the cytoskeleton. The protein localises to the microtubule organizing center. It is found in the centrosome. The enzyme catalyses O-phospho-L-seryl-[protein] + H2O = L-seryl-[protein] + phosphate. It carries out the reaction O-phospho-L-threonyl-[protein] + H2O = L-threonyl-[protein] + phosphate. Protein phosphatase which plays an essential role in meiosis and in early embryonic mitosis. During spermatocyte meiosis and the first embryonic mitosis, regulates centrosome maturation, and thus spindle formation, by recruiting some of the components of the pericentriolar material (PCM). During oocyte meiosis I, regulates meiotic chromosome dynamics including synapsis-independent chromosome pairing, restriction of synapsis to homologous chromosomes, programmed DNA double-strand break initiation and crossover formation resulting in chiasma formation. During oocyte meiosis II and probably together with regulatory subunit ppfr-1, may regulate microtubule severing by dephosphorylating and activating mei-1, a component of the katanin microtubule severing complex. The polypeptide is Serine/threonine-protein phosphatase 4 catalytic subunit 1 (Caenorhabditis elegans).